A 330-amino-acid chain; its full sequence is Aspartate--ammonia ligase (330 aa).

Belongs to the class-II aminoacyl-tRNA synthetase family. AsnA subfamily.

Its subcellular location is the cytoplasm. The enzyme catalyses L-aspartate + NH4(+) + ATP = L-asparagine + AMP + diphosphate + H(+). It functions in the pathway amino-acid biosynthesis; L-asparagine biosynthesis; L-asparagine from L-aspartate (ammonia route): step 1/1. The chain is Aspartate--ammonia ligase from Escherichia coli O139:H28 (strain E24377A / ETEC).